The chain runs to 780 residues: ATP-dependent 6-phosphofructokinase, liver type (780 aa).

An N-acetylalanine modification is found at alanine 2. Positions 2 to 390 (AAVDLEKLRA…NWNIYKLLAH (389 aa)) are N-terminal catalytic PFK domain 1. Residues glycine 25, 88-89 (RC), and 118-121 (GDGS) contribute to the ATP site. A Mg(2+)-binding site is contributed by aspartate 119. Substrate contacts are provided by residues 164 to 166 (SID), arginine 201, 208 to 210 (MGR), glutamate 264, arginine 292, and 298 to 301 (HVQR). Aspartate 166 acts as the Proton acceptor in catalysis. Serine 377 carries the post-translational modification Phosphoserine. Positions 391–400 (QKPPKEKSNF) are interdomain linker. Residues 401-780 (SLAILNVGAP…RRTLSMDKGF (380 aa)) are C-terminal regulatory PFK domain 2. Residues arginine 470, 527–531 (TISNN), arginine 565, 572–574 (MGG), and glutamate 628 contribute to the beta-D-fructose 2,6-bisphosphate site. A glycan (O-linked (GlcNAc) serine) is linked at serine 529. Tyrosine 640 is modified (phosphotyrosine). Beta-D-fructose 2,6-bisphosphate-binding positions include arginine 654, 660–663 (HLQQ), and arginine 734. Serine 775 bears the Phosphoserine mark.

This sequence belongs to the phosphofructokinase type A (PFKA) family. ATP-dependent PFK group I subfamily. Eukaryotic two domain clade 'E' sub-subfamily. Homo- and heterotetramers. Phosphofructokinase (PFK) enzyme functions as a tetramer composed of different combinations of 3 types of subunits, called PFKM (where M stands for Muscle), PFKL (Liver) and PFKP (Platelet). The composition of the PFK tetramer differs according to the tissue type it is present in. In muscles, it is composed of 4 PFKM subunits (also called M4). In the liver, the predominant form is a tetramer of PFKL subunits (L4). In erythrocytes, both PFKM and PFKL subunits randomly tetramerize to form M4, L4 and other combinations (ML3, M2L2, M3L). The kinetic and regulatory properties of the tetrameric enzyme are dependent on the subunit composition, hence can vary across tissues. It depends on Mg(2+) as a cofactor. Post-translationally, glcNAcylation at Ser-529 by OGT decreases enzyme activity, leading to redirect glucose flux through the oxidative pentose phosphate pathway. Glycosylation is stimulated by both hypoxia and glucose deprivation.

It localises to the cytoplasm. It carries out the reaction beta-D-fructose 6-phosphate + ATP = beta-D-fructose 1,6-bisphosphate + ADP + H(+). It functions in the pathway carbohydrate degradation; glycolysis; D-glyceraldehyde 3-phosphate and glycerone phosphate from D-glucose: step 3/4. Allosterically activated by ADP, AMP, or fructose 2,6-bisphosphate, and allosterically inhibited by ATP or citrate. GlcNAcylation by OGT overcomes allosteric regulation. Functionally, catalyzes the phosphorylation of D-fructose 6-phosphate to fructose 1,6-bisphosphate by ATP, the first committing step of glycolysis. Negatively regulates the phagocyte oxidative burst in response to bacterial infection by controlling cellular NADPH biosynthesis and NADPH oxidase-derived reactive oxygen species. Upon macrophage activation, drives the metabolic switch toward glycolysis, thus preventing glucose turnover that produces NADPH via pentose phosphate pathway. This chain is ATP-dependent 6-phosphofructokinase, liver type, found in Homo sapiens (Human).